The following is a 137-amino-acid chain: Large ribosomal subunit protein uL16 (137 aa).

Positions 1-17 (MLSPKRTKFRKQQRGRM) are enriched in basic residues. Positions 1 to 24 (MLSPKRTKFRKQQRGRMRGNANSG) are disordered.

Belongs to the universal ribosomal protein uL16 family. Part of the 50S ribosomal subunit.

In terms of biological role, binds 23S rRNA and is also seen to make contacts with the A and possibly P site tRNAs. This Trichodesmium erythraeum (strain IMS101) protein is Large ribosomal subunit protein uL16.